The primary structure comprises 313 residues: Potassium channel subfamily K member 6 (313 aa).

The Cytoplasmic segment spans residues 1-4 (MRRG). Residues 5–25 (ALLAGALAAYAAYLVLGALLV) traverse the membrane as a helical segment. N79 and N85 each carry an N-linked (GlcNAc...) asparagine glycan. The pore-forming intramembrane region spans 90 to 115 (AWDFASALFFASTLITTVGYGYTTPL). 4 residues coordinate K(+): T106, V107, G108, and Y109. The tract at residues 106–111 (TVGYGY) is selectivity filter 1. The chain crosses the membrane as a helical span at residues 121-141 (AFSIAFALLGVPTTMLLLTAS). The Cytoplasmic portion of the chain corresponds to 142-172 (AQRLSLLLTHVPLSWLSMRWGWDPRRAACWH). Residues 173 to 193 (LVALLGVVVTVCFLVPAVIFA) traverse the membrane as a helical segment. An intramembrane region (pore-forming) is located at residues 199–223 (WSFLDAFYFCFISLSTIGLGDYVPG). 3 residues coordinate K(+): T214, I215, and G216. Positions 214-219 (TIGLGD) are selectivity filter 2. A helical membrane pass occupies residues 236–256 (VLVTVYLFLGLVAMVLVLQTF). Topologically, residues 257-313 (RHVSDLHGLTELILLPPPCPASFNADEDDRVDILGPQPESHQQLSASSHTDYASIPR) are cytoplasmic. The Lysosomal targeting signal motif lies at 282 to 290 (DEDDRVDIL). Positions 288 to 313 (DILGPQPESHQQLSASSHTDYASIPR) are disordered. Polar residues predominate over residues 295 to 307 (ESHQQLSASSHTD). Residues 308-312 (YASIP) carry the Lysosomal targeting signal motif.

Belongs to the two pore domain potassium channel (TC 1.A.1.8) family. As to quaternary structure, homodimer; disulfide-linked. Post-translationally, N-glycosylation is necessary for targeting to lysosomes. As to expression, widespread expression, detected in all tissues tested except for skeletal muscle. Strongest expression in placenta, pancreas, heart, colon and spleen, lower levels detected in peripheral blood leukocytes, lung, liver, kidney and thymus. Lowest expression detected in brain.

The protein localises to the late endosome membrane. The protein resides in the lysosome membrane. The catalysed reaction is K(+)(in) = K(+)(out). Its function is as follows. K(+) channel that conducts outward rectifying currents at the membranes of the endolysosomal system. Active in lysosomes where it regulates lysosome numbers and size. In macrophages, enables K(+) efflux coupled to ATP-induced NLRP3 inflammasome activation upon bacterial infection. Cooperates with ATP-gated P2RX7 channels to activate NLRP3 inflammasome, with P2RX7 conducting Ca(2+) and Na(+) influx that sets the membrane potential for K(+) efflux. Functionally, does not display channel activity. The chain is Potassium channel subfamily K member 6 from Homo sapiens (Human).